A 142-amino-acid chain; its full sequence is Large ribosomal subunit protein uL16 (142 aa).

Belongs to the universal ribosomal protein uL16 family. As to quaternary structure, part of the 50S ribosomal subunit.

Functionally, binds 23S rRNA and is also seen to make contacts with the A and possibly P site tRNAs. The polypeptide is Large ribosomal subunit protein uL16 (Thermotoga maritima (strain ATCC 43589 / DSM 3109 / JCM 10099 / NBRC 100826 / MSB8)).